Here is a 513-residue protein sequence, read N- to C-terminus: 2,3-bisphosphoglycerate-independent phosphoglycerate mutase (513 aa).

Mn(2+) contacts are provided by Asp13 and Ser63. Ser63 serves as the catalytic Phosphoserine intermediate. Substrate-binding positions include His124, 154–155 (RD), Arg186, Arg192, 262–265 (RADR), and Lys335. Asp402, His406, Asp443, His444, and His462 together coordinate Mn(2+).

Belongs to the BPG-independent phosphoglycerate mutase family. Monomer. Mn(2+) serves as cofactor.

The catalysed reaction is (2R)-2-phosphoglycerate = (2R)-3-phosphoglycerate. It participates in carbohydrate degradation; glycolysis; pyruvate from D-glyceraldehyde 3-phosphate: step 3/5. Functionally, catalyzes the interconversion of 2-phosphoglycerate and 3-phosphoglycerate. The chain is 2,3-bisphosphoglycerate-independent phosphoglycerate mutase from Photobacterium profundum (strain SS9).